A 256-amino-acid chain; its full sequence is Late embryogenesis abundant protein 32 (256 aa).

The span at 1 to 14 (MSQEQPRRPREPVK) shows a compositional bias: basic and acidic residues. Residues 1-20 (MSQEQPRRPREPVKYGDVFE) are disordered. The short motif at 5–9 (QPRRP) is the Nuclear localization signal (NLS) element. SMP domains are found at residues 13-66 (VKYG…TTNI), 130-187 (ITIG…HNAT), and 195-253 (IKLR…LNER).

The protein belongs to the LEA type SMP family. In terms of tissue distribution, embryo specific, only in dry mature seeds. Expressed at low levels.

The protein resides in the cytoplasm. Its subcellular location is the nucleus. Functionally, LEA proteins are late embryonic proteins abundant in higher plant seed embryos. The function of those proteins is not known. This is Late embryogenesis abundant protein 32 from Arabidopsis thaliana (Mouse-ear cress).